A 185-amino-acid chain; its full sequence is Peptide deformylase (185 aa).

Fe cation contacts are provided by Cys109 and His152. Glu153 is an active-site residue. Fe cation is bound at residue His156.

It belongs to the polypeptide deformylase family. It depends on Fe(2+) as a cofactor.

The enzyme catalyses N-terminal N-formyl-L-methionyl-[peptide] + H2O = N-terminal L-methionyl-[peptide] + formate. Functionally, removes the formyl group from the N-terminal Met of newly synthesized proteins. Requires at least a dipeptide for an efficient rate of reaction. N-terminal L-methionine is a prerequisite for activity but the enzyme has broad specificity at other positions. This Roseiflexus castenholzii (strain DSM 13941 / HLO8) protein is Peptide deformylase.